Consider the following 736-residue polypeptide: Phosphoribosylformylglycinamidine synthase subunit PurL (736 aa).

H48 is an active-site residue. Y51 and K90 together coordinate ATP. E92 is a Mg(2+) binding site. Substrate-binding positions include 93–96 (SHNH) and R115. H94 serves as the catalytic Proton acceptor. D116 is a binding site for Mg(2+). Q239 provides a ligand contact to substrate. D267 contributes to the Mg(2+) binding site. 311 to 313 (ESQ) contributes to the substrate binding site. Positions 492 and 529 each coordinate ATP. N530 serves as a coordination point for Mg(2+). S532 contacts substrate.

The protein belongs to the FGAMS family. Monomer. Part of the FGAM synthase complex composed of 1 PurL, 1 PurQ and 2 PurS subunits.

The protein resides in the cytoplasm. It carries out the reaction N(2)-formyl-N(1)-(5-phospho-beta-D-ribosyl)glycinamide + L-glutamine + ATP + H2O = 2-formamido-N(1)-(5-O-phospho-beta-D-ribosyl)acetamidine + L-glutamate + ADP + phosphate + H(+). Its pathway is purine metabolism; IMP biosynthesis via de novo pathway; 5-amino-1-(5-phospho-D-ribosyl)imidazole from N(2)-formyl-N(1)-(5-phospho-D-ribosyl)glycinamide: step 1/2. Part of the phosphoribosylformylglycinamidine synthase complex involved in the purines biosynthetic pathway. Catalyzes the ATP-dependent conversion of formylglycinamide ribonucleotide (FGAR) and glutamine to yield formylglycinamidine ribonucleotide (FGAM) and glutamate. The FGAM synthase complex is composed of three subunits. PurQ produces an ammonia molecule by converting glutamine to glutamate. PurL transfers the ammonia molecule to FGAR to form FGAM in an ATP-dependent manner. PurS interacts with PurQ and PurL and is thought to assist in the transfer of the ammonia molecule from PurQ to PurL. The protein is Phosphoribosylformylglycinamidine synthase subunit PurL of Beijerinckia indica subsp. indica (strain ATCC 9039 / DSM 1715 / NCIMB 8712).